The following is a 176-amino-acid chain: Cytidylate kinase (176 aa).

7 to 15 lines the ATP pocket; the sequence is GPPGSGTTS.

It belongs to the cytidylate kinase family. Type 2 subfamily.

Its subcellular location is the cytoplasm. It catalyses the reaction CMP + ATP = CDP + ADP. The catalysed reaction is dCMP + ATP = dCDP + ADP. This is Cytidylate kinase from Methanosphaerula palustris (strain ATCC BAA-1556 / DSM 19958 / E1-9c).